The sequence spans 143 residues: Hemoglobin subunit alpha-1 (143 aa).

Serine 2 is modified (N-acetylserine). Residues 2 to 143 (SLTAKDKDTV…LSRALAEKYR (142 aa)) form the Globin domain. An O2-binding site is contributed by histidine 60. A heme b-binding site is contributed by histidine 89.

This sequence belongs to the globin family. Hb1 is a heterotetramer of two alpha-1 chains and two beta-1 chains. As to expression, red blood cells.

Its function is as follows. Involved in oxygen transport from gills to the various peripheral tissues. The chain is Hemoglobin subunit alpha-1 (hba1) from Anarhichas minor (Arctic spotted wolffish).